Reading from the N-terminus, the 281-residue chain is BURP domain-containing protein BNM2C (281 aa).

A signal peptide spans 1-25 (MASLRFSVTFPALFSLLLSLWVVDA). In terms of domain architecture, BURP spans 59-281 (FFKISDLKLG…PLDNIVWVSK (223 aa)).

Expressed in the radicle of germinating seeds 2 days post-imbibition (DPI) and in roots of 30-DPI young plants. Expressed in the embryo and seed coat tissues of developing seeds. The protein accumulates only in seeds and only long after transcript accumulation becomes evident.

The protein resides in the protein storage vacuole. The chain is BURP domain-containing protein BNM2C from Brassica napus (Rape).